Reading from the N-terminus, the 864-residue chain is Leucine--tRNA ligase (864 aa).

A 'HIGH' region motif is present at residues 42–52 (PYPSGKLHMGH). Residues 624 to 628 (KMSKS) carry the 'KMSKS' region motif. Lys-627 provides a ligand contact to ATP.

Belongs to the class-I aminoacyl-tRNA synthetase family.

It localises to the cytoplasm. It carries out the reaction tRNA(Leu) + L-leucine + ATP = L-leucyl-tRNA(Leu) + AMP + diphosphate. This Burkholderia cenocepacia (strain HI2424) protein is Leucine--tRNA ligase.